Consider the following 437-residue polypeptide: Protein translocase subunit SecY (437 aa).

Helical transmembrane passes span 19–39 (LFTL…IPGV), 69–89 (LLQI…SIIL), 122–142 (VALA…GALF), 157–177 (IFTT…VMWL), 189–209 (GMSI…LWAI), 219–239 (WIEF…VVFV), 275–295 (GVIP…IVQF), 318–338 (HIIL…AISF), 378–398 (GSLY…GFGA), and 400–420 (QNFP…LETV).

Belongs to the SecY/SEC61-alpha family. As to quaternary structure, component of the Sec protein translocase complex. Heterotrimer consisting of SecY, SecE and SecG subunits. The heterotrimers can form oligomers, although 1 heterotrimer is thought to be able to translocate proteins. Interacts with the ribosome. Interacts with SecDF, and other proteins may be involved. Interacts with SecA.

It localises to the cell membrane. In terms of biological role, the central subunit of the protein translocation channel SecYEG. Consists of two halves formed by TMs 1-5 and 6-10. These two domains form a lateral gate at the front which open onto the bilayer between TMs 2 and 7, and are clamped together by SecE at the back. The channel is closed by both a pore ring composed of hydrophobic SecY resides and a short helix (helix 2A) on the extracellular side of the membrane which forms a plug. The plug probably moves laterally to allow the channel to open. The ring and the pore may move independently. The sequence is that of Protein translocase subunit SecY from Streptomyces coelicolor (strain ATCC BAA-471 / A3(2) / M145).